We begin with the raw amino-acid sequence, 909 residues long: Aconitate hydratase A (909 aa).

[4Fe-4S] cluster-binding residues include Cys-450, Cys-516, and Cys-519.

Belongs to the aconitase/IPM isomerase family. Monomer. [4Fe-4S] cluster serves as cofactor.

The catalysed reaction is citrate = D-threo-isocitrate. It catalyses the reaction 3-hydroxybutane-1,2,3-tricarboxylate = 2-methyl-cis-aconitate + H2O. The protein operates within carbohydrate metabolism; tricarboxylic acid cycle; isocitrate from oxaloacetate: step 2/2. In terms of biological role, involved in both the tricarboxylic acid (TCA) and methylcitric acid cycles. Catalyzes the reversible isomerization of citrate to isocitrate via cis-aconitate. Also catalyzes the rehydration of 2-methyl-cis-aconitate to produce 2-methylisocitrate. The apo form of AcnA functions as a RNA-binding regulatory protein which plays a role in the regulation of citrate concentration and in the sporulation. To prevent the accumulation of excessive levels of citrate, it binds near the 5' end of the citZ mRNA, decreasing its stability and thereby limiting the concentration of citrate synthase in the cell. Aconitase also binds to the gerE transcript late in sporulation and stabilizes it for translation, thereby increasing the rate and level of GerE protein accumulation. The sequence is that of Aconitate hydratase A (citB) from Bacillus subtilis (strain 168).